We begin with the raw amino-acid sequence, 549 residues long: Lipase 1 (549 aa).

The signal sequence occupies residues 1-15 (MELALALSLIASVAA). An intrachain disulfide couples cysteine 75 to cysteine 112. Serine 224 (acyl-ester intermediate) is an active-site residue. Cysteine 283 and cysteine 292 are oxidised to a cystine. A glycan (N-linked (GlcNAc...) asparagine) is linked at asparagine 329. Glutamate 356 serves as the catalytic Charge relay system. Asparagine 366 is a glycosylation site (N-linked (GlcNAc...) asparagine). The Charge relay system role is filled by histidine 464.

This sequence belongs to the type-B carboxylesterase/lipase family.

The enzyme catalyses a triacylglycerol + H2O = a diacylglycerol + a fatty acid + H(+). This Diutina rugosa (Yeast) protein is Lipase 1 (LIP1).